The chain runs to 93 residues: Ribonuclease P protein component 1 (93 aa).

The protein belongs to the eukaryotic/archaeal RNase P protein component 1 family. In terms of assembly, consists of a catalytic RNA component and at least 4-5 protein subunits.

It localises to the cytoplasm. It catalyses the reaction Endonucleolytic cleavage of RNA, removing 5'-extranucleotides from tRNA precursor.. Functionally, part of ribonuclease P, a protein complex that generates mature tRNA molecules by cleaving their 5'-ends. The polypeptide is Ribonuclease P protein component 1 (Methanosphaera stadtmanae (strain ATCC 43021 / DSM 3091 / JCM 11832 / MCB-3)).